The following is a 168-amino-acid chain: MGIENLVQNDVVLTRLDALFNWGRKNSLWPMIFGTACCAIEFMSAVSSKHDLSRFGAEVMRFSPRQADLMIIAGTISFKQAPILKEIYDQMCEPKWVVSMGACACSGGFYDNYTTLQGIDQIIPVDVYISGCPPRPEAIIDAILAIQDKISNESIKDRHKDYKGLLDA.

[4Fe-4S] cluster is bound by residues C37, C38, C103, and C132.

This sequence belongs to the complex I 20 kDa subunit family. In terms of assembly, NDH-1 is composed of 14 different subunits. Subunits NuoB, C, D, E, F, and G constitute the peripheral sector of the complex. [4Fe-4S] cluster is required as a cofactor.

It is found in the cell inner membrane. The enzyme catalyses a quinone + NADH + 5 H(+)(in) = a quinol + NAD(+) + 4 H(+)(out). NDH-1 shuttles electrons from NADH, via FMN and iron-sulfur (Fe-S) centers, to quinones in the respiratory chain. The immediate electron acceptor for the enzyme in this species is believed to be ubiquinone. Couples the redox reaction to proton translocation (for every two electrons transferred, four hydrogen ions are translocated across the cytoplasmic membrane), and thus conserves the redox energy in a proton gradient. This chain is NADH-quinone oxidoreductase subunit B, found in Campylobacter fetus subsp. fetus (strain 82-40).